Here is a 732-residue protein sequence, read N- to C-terminus: Sesterbrasiliatriene synthase PbSS (732 aa).

The interval 1–342 (MDFLSGAFHY…SRYHRDDLIT (342 aa)) is terpene cyclase. D105 and D109 together coordinate Mg(2+). Substrate is bound by residues D105, D109, 193–196 (RLSE), 242–246 (FNKEF), and 334–335 (RY). The short motif at 105 to 109 (DDVTD) is the DDXXD 1 element. Residues 238-246 (DYYSFNKEF) carry the NSE/DTE motif. Residues 343–732 (TAGDRAMIVG…ARILLLGLGL (390 aa)) are prenyltransferase. Disordered stretches follow at residues 371–390 (KSAT…WSDS) and 398–420 (ACYT…HKAN). The span at 411-420 (NGTEAGHKAN) shows a compositional bias: basic and acidic residues. Residues K453, R456, and H485 each coordinate isopentenyl diphosphate. The Mg(2+) site is built by D492 and D496. The short motif at 492 to 496 (DDIED) is the DDXXD 2 element. R501 provides a ligand contact to dimethylallyl diphosphate. Position 502 (R502) interacts with isopentenyl diphosphate. Dimethylallyl diphosphate is bound by residues K579, T580, Q615, N622, K632, and K642.

In the N-terminal section; belongs to the terpene synthase family. It in the C-terminal section; belongs to the FPP/GGPP synthase family. As to quaternary structure, hexamer. Requires Mg(2+) as cofactor.

The enzyme catalyses isopentenyl diphosphate + (2E,6E)-farnesyl diphosphate = (2E,6E,10E)-geranylgeranyl diphosphate + diphosphate. The catalysed reaction is isopentenyl diphosphate + (2E,6E,10E)-geranylgeranyl diphosphate = (2E,6E,10E,14E)-geranylfarnesyl diphosphate + diphosphate. The protein operates within secondary metabolite biosynthesis; terpenoid biosynthesis. Functionally, bifunctional sesterterpene synthase that possesses both prenyl transferase and terpene cyclase activity, converting isopentenyl diphosphate and dimethylallyl diphosphate into geranylfarnesyl diphosphate (GFPP) and further converting GFPP into sesterbrasiliatriene. This Penicillium brasilianum protein is Sesterbrasiliatriene synthase PbSS (PbSS).